The following is a 509-amino-acid chain: Maturase K (509 aa).

This sequence belongs to the intron maturase 2 family. MatK subfamily.

It localises to the plastid. The protein resides in the chloroplast. Its function is as follows. Usually encoded in the trnK tRNA gene intron. Probably assists in splicing its own and other chloroplast group II introns. In Galbulimima belgraveana (Northern pigeonberry ash), this protein is Maturase K.